An 804-amino-acid polypeptide reads, in one-letter code: Ral guanine nucleotide dissociation stimulator-like 1 (804 aa).

The N-terminal Ras-GEF domain occupies Lys-101 to Arg-231. Residues Glu-270 to Leu-539 enclose the Ras-GEF domain. Disordered stretches follow at residues Asn-564 to His-611 and Ser-640 to Pro-676. Composition is skewed to low complexity over residues Pro-581–Met-607 and Ser-640–Thr-649. Over residues Ile-661–Ser-671 the composition is skewed to polar residues. The region spanning Asp-684–Ser-771 is the Ras-associating domain.

Functionally, probable guanine nucleotide exchange factor. The sequence is that of Ral guanine nucleotide dissociation stimulator-like 1 (rgl1) from Danio rerio (Zebrafish).